The primary structure comprises 270 residues: Mediator of RNA polymerase II transcription subunit 4 (270 aa).

A disordered region spans residues 1 to 22 (MAASSSGEKEKERMGGVSGMTG). The residue at position 2 (Ala2) is an N-acetylalanine. A coiled-coil region spans residues 26–131 (TRERLLSALE…ATAVYQAKEK (106 aa)). Position 32 is a phosphoserine (Ser32). The interval 227–270 (MSVNMLPPNHSTDFLLEPPGHNKENEDDVEVMSTDSSSSSSDSD) is disordered. Positions 259–270 (STDSSSSSSDSD) are enriched in low complexity.

This sequence belongs to the Mediator complex subunit 4 family. In terms of assembly, component of the Mediator complex, which is composed of MED1, MED4, MED6, MED7, MED8, MED9, MED10, MED11, MED12, MED13, MED13L, MED14, MED15, MED16, MED17, MED18, MED19, MED20, MED21, MED22, MED23, MED24, MED25, MED26, MED27, MED29, MED30, MED31, CCNC, CDK8 and CDC2L6/CDK11. The MED12, MED13, CCNC and CDK8 subunits form a distinct module termed the CDK8 module. Mediator containing the CDK8 module is less active than Mediator lacking this module in supporting transcriptional activation. Individual preparations of the Mediator complex lacking one or more distinct subunits have been variously termed ARC, CRSP, DRIP, PC2, SMCC and TRAP.

The protein localises to the nucleus. Functionally, component of the Mediator complex, a coactivator involved in the regulated transcription of nearly all RNA polymerase II-dependent genes. Mediator functions as a bridge to convey information from gene-specific regulatory proteins to the basal RNA polymerase II transcription machinery. Mediator is recruited to promoters by direct interactions with regulatory proteins and serves as a scaffold for the assembly of a functional preinitiation complex with RNA polymerase II and the general transcription factors. This chain is Mediator of RNA polymerase II transcription subunit 4 (Med4), found in Rattus norvegicus (Rat).